We begin with the raw amino-acid sequence, 316 residues long: Aspartate carbamoyltransferase catalytic subunit (316 aa).

Residues R66 and T67 each contribute to the carbamoyl phosphate site. K94 is an L-aspartate binding site. Residues R116, H146, and Q149 each contribute to the carbamoyl phosphate site. The L-aspartate site is built by R179 and R234. Carbamoyl phosphate is bound by residues G275 and P276.

Belongs to the aspartate/ornithine carbamoyltransferase superfamily. ATCase family. Heterododecamer (2C3:3R2) of six catalytic PyrB chains organized as two trimers (C3), and six regulatory PyrI chains organized as three dimers (R2).

The catalysed reaction is carbamoyl phosphate + L-aspartate = N-carbamoyl-L-aspartate + phosphate + H(+). Its pathway is pyrimidine metabolism; UMP biosynthesis via de novo pathway; (S)-dihydroorotate from bicarbonate: step 2/3. In terms of biological role, catalyzes the condensation of carbamoyl phosphate and aspartate to form carbamoyl aspartate and inorganic phosphate, the committed step in the de novo pyrimidine nucleotide biosynthesis pathway. The sequence is that of Aspartate carbamoyltransferase catalytic subunit from Nitrosomonas eutropha (strain DSM 101675 / C91 / Nm57).